A 198-amino-acid chain; its full sequence is Bcl-2-like protein 11 (198 aa).

The segment at 1–72 (MAKQPSDVSS…PLAPPASPGP (72 aa)) is disordered. S69 bears the Phosphoserine; by MAPK mark. 3 positions are modified to phosphoserine: S77, S87, and S94. Positions 148–162 (IAQELRRIGDEFNAY) match the BH3 motif.

This sequence belongs to the Bcl-2 family. As to quaternary structure, forms heterodimers with a number of antiapoptotic Bcl-2 proteins, including MCL1, BCL2, BCL2L1 isoform Bcl-X(L), BCL2A1/BFL-1, BHRF1, and BCL2L2/BCLW. Does not heterodimerize with proapoptotic proteins such as BAD, BOK or BAK. Identified in a complex containing BCL2L11, DYNLL1 and BCL2L1 isoform Bcl-X(L); BH3 integrity is required for BCL2L1-binding. Interacts with YWHAZ. When phosphorylated, interacts with TRIM2; this interaction is associated with ubiquitination and degradation. Interacts with MCL1; may sequester BCL2L11 to prevent its pro-apoptotic activity. Interacts with GIMAP5. Interacts with BCL2L10/BCL-B. Interacts (when phosphorylated) with USP27X; the interaction leads to BCL2L11 deubiquitination and stabilization. Interacts with humanin; the interaction prevents BIM-induced apoptosis. In terms of assembly, does not interact with humanin. As to quaternary structure, interacts with BAX; the interaction may lead to BAX activation through conformational change. Does not interact with humanin. Interacts with BAX; the interaction may lead to BAX activation through conformational change. Post-translationally, phosphorylation at Ser-69 by MAPK1/MAPK3 leads to interaction with TRIM2 and polyubiquitination, followed by proteasomal degradation. Deubiquitination catalyzed by USP27X stabilizes the protein. In terms of processing, ubiquitination by TRIM2 following phosphorylation by MAPK1/MAPK3 leads to proteasomal degradation. Conversely, deubiquitination catalyzed by USP27X stabilizes the protein. Isoform BimEL, isoform BimL and isoform BimS are the predominant isoforms and are widely expressed with tissue-specific variation. Isoform Bim-gamma is most abundantly expressed in small intestine and colon, and in lower levels in spleen, prostate, testis, heart, liver and kidney.

Its subcellular location is the endomembrane system. It localises to the mitochondrion. In terms of biological role, induces apoptosis and anoikis. Isoform BimL is more potent than isoform BimEL. Isoform Bim-alpha1, isoform Bim-alpha2 and isoform Bim-alpha3 induce apoptosis, although less potent than isoform BimEL, isoform BimL and isoform BimS. Isoform Bim-gamma induces apoptosis. Isoform Bim-alpha3 induces apoptosis possibly through a caspase-mediated pathway. Isoform BimAC and isoform BimABC lack the ability to induce apoptosis. This is Bcl-2-like protein 11 (BCL2L11) from Homo sapiens (Human).